A 42-amino-acid chain; its full sequence is Serine protease inhibitor 8 (42 aa).

This sequence belongs to the protease inhibitor I3 (leguminous Kunitz-type inhibitor) family. In terms of tissue distribution, cortex of potato tuber.

Its function is as follows. Potent inhibitor of animal pancreatic trypsin (serine protease). The chain is Serine protease inhibitor 8 from Solanum tuberosum (Potato).